A 142-amino-acid polypeptide reads, in one-letter code: Hemoglobin subunit alpha-2 (142 aa).

The Globin domain occupies 2-142 (LLSADDKKHI…VSTVLTSKYR (141 aa)). His59 serves as a coordination point for O2. Position 88 (His88) interacts with heme b.

Belongs to the globin family. Heterotetramer of two alpha chains and two beta chains. In terms of tissue distribution, red blood cells.

In terms of biological role, involved in oxygen transport from the lung to the various peripheral tissues. The chain is Hemoglobin subunit alpha-2 (hba2) from Xenopus laevis (African clawed frog).